Here is a 396-residue protein sequence, read N- to C-terminus: L-lactate dehydrogenase (396 aa).

The region spanning 1 to 380 is the FMN hydroxy acid dehydrogenase domain; that stretch reads MIISAASDYR…TQDSLVQGLG (380 aa). Tyr24 lines the substrate pocket. Ser106 and Gln127 together coordinate FMN. Tyr129 contacts substrate. Thr155 contributes to the FMN binding site. Arg164 is a binding site for substrate. Lys251 is an FMN binding site. Catalysis depends on His275, which acts as the Proton acceptor. Arg278 provides a ligand contact to substrate. Residue 306 to 330 participates in FMN binding; that stretch reads DSGIRNGLDVVRMIALGADTILLGR.

It belongs to the FMN-dependent alpha-hydroxy acid dehydrogenase family. The cofactor is FMN.

The protein localises to the cell inner membrane. The enzyme catalyses (S)-lactate + A = pyruvate + AH2. In terms of biological role, catalyzes the conversion of L-lactate to pyruvate. Is coupled to the respiratory chain. The chain is L-lactate dehydrogenase from Escherichia coli O81 (strain ED1a).